Reading from the N-terminus, the 208-residue chain is Coiled-coil domain-containing protein 25 (208 aa).

The Extracellular portion of the chain corresponds to 1 to 105 (MVFYFTSSSV…SNLKKTADMD (105 aa)). Positions 21–25 (KDKYE) are DNA-binding. At K23 the chain carries N6-acetyllysine. The helical transmembrane segment at 106–122 (VGQIGFHRQKDVKIVTV) threads the bilayer. Residues 117–187 (VKIVTVEKKV…REMDELRSYS (71 aa)) adopt a coiled-coil conformation. Topologically, residues 123–208 (EKKVNEILNR…QDGNDSDEFM (86 aa)) are cytoplasmic. Over residues 144–184 (LAAEKEGRDREERNEKKAQIQEMKRKEKEEMKKKREMDELR) the composition is skewed to basic and acidic residues. A disordered region spans residues 144-208 (LAAEKEGRDR…QDGNDSDEFM (65 aa)). The residue at position 204 (S204) is a Phosphoserine.

It belongs to the CCDC25 family. In terms of assembly, interacts (via cytoplasmic region) with ILK.

Its subcellular location is the cell membrane. The protein localises to the endomembrane system. Transmembrane receptor that senses neutrophil extracellular traps (NETs) and triggers the ILK-PARVB pathway to enhance cell motility. NETs are mainly composed of DNA fibers and are released by neutrophils to bind pathogens during inflammation. Formation of NETs is also associated with cancer metastasis, NET-DNA acting as a chemotactic factor to attract cancer cells. Specifically binds NETs on its extracellular region, in particular the 8-OHdG-enriched DNA present in NETs, and recruits ILK, initiating the ILK-PARVB cascade to induce cytoskeleton rearrangement and directional migration of cells. In the context of cancer, promotes cancer metastasis by sensing NETs and promoting migration of tumor cells. This is Coiled-coil domain-containing protein 25 from Mus musculus (Mouse).